We begin with the raw amino-acid sequence, 178 residues long: MKNWISSFILVHQEKSISFNTNILETNLINIIILLIILFYFLKGLLKDNLSSRQENILSTIQNSENRINEANERLVDAKLQWSQAQITLEELKNQTLQNKLILFNAEFEIKNQVLSQHFNNLLMTLYYREQQAFNNIKKQVSELALKKVIAKLQAPLMEEDQSVIIINKIHRLGGNLE.

Residues 26–46 traverse the membrane as a helical segment; the sequence is TNLINIIILLIILFYFLKGLL.

The protein belongs to the ATPase B chain family. In terms of assembly, F-type ATPases have 2 components, F(1) - the catalytic core - and F(0) - the membrane proton channel. F(1) has five subunits: alpha(3), beta(3), gamma(1), delta(1), epsilon(1). F(0) has four main subunits: a(1), b(1), b'(1) and c(10-14). The alpha and beta chains form an alternating ring which encloses part of the gamma chain. F(1) is attached to F(0) by a central stalk formed by the gamma and epsilon chains, while a peripheral stalk is formed by the delta, b and b' chains.

The protein resides in the plastid. It localises to the chloroplast thylakoid membrane. F(1)F(0) ATP synthase produces ATP from ADP in the presence of a proton or sodium gradient. F-type ATPases consist of two structural domains, F(1) containing the extramembraneous catalytic core and F(0) containing the membrane proton channel, linked together by a central stalk and a peripheral stalk. During catalysis, ATP synthesis in the catalytic domain of F(1) is coupled via a rotary mechanism of the central stalk subunits to proton translocation. In terms of biological role, component of the F(0) channel, it forms part of the peripheral stalk, linking F(1) to F(0). In Vaucheria litorea (Yellow-green alga), this protein is ATP synthase subunit b, chloroplastic.